The chain runs to 364 residues: PDZ and LIM domain protein 3 (364 aa).

The region spanning 1–84 is the PDZ domain; that stretch reads MPQTVILPGP…QLCLKIDRGE (84 aa). Phosphoserine occurs at positions 18, 93, and 264. The 60-residue stretch at 292-351 folds into the LIM zinc-binding domain; sequence PLCDKCGSGIVGAVVKARDKYRHPECFVCADCNLNLKQKGYFFIEGELYCETHARARTKP.

Interacts with ACTN2. Forms a heterodimer with PDLIM4 (via LIM domain). Isoform 1 is highly expressed in differentiated skeletal muscle. Isoform 2 is heart-specific.

It is found in the cytoplasm. The protein localises to the myofibril. The protein resides in the sarcomere. It localises to the z line. May play a role in the organization of actin filament arrays within muscle cells. The sequence is that of PDZ and LIM domain protein 3 (PDLIM3) from Homo sapiens (Human).